The chain runs to 128 residues: Small ribosomal subunit protein uS13 (128 aa).

Residues 95–118 are compositionally biased toward basic residues; it reads GLPVRGQRTHTNARTRKGPKKGLV. The tract at residues 95–128 is disordered; the sequence is GLPVRGQRTHTNARTRKGPKKGLVRKAAAPAPMA.

It belongs to the universal ribosomal protein uS13 family. In terms of assembly, part of the 30S ribosomal subunit. Forms a loose heterodimer with protein S19. Forms two bridges to the 50S subunit in the 70S ribosome.

In terms of biological role, located at the top of the head of the 30S subunit, it contacts several helices of the 16S rRNA. In the 70S ribosome it contacts the 23S rRNA (bridge B1a) and protein L5 of the 50S subunit (bridge B1b), connecting the 2 subunits; these bridges are implicated in subunit movement. Contacts the tRNAs in the A and P-sites. This is Small ribosomal subunit protein uS13 from Anaeromyxobacter dehalogenans (strain 2CP-1 / ATCC BAA-258).